Reading from the N-terminus, the 210-residue chain is UPF0301 protein M446_6268 (210 aa).

It belongs to the UPF0301 (AlgH) family.

In Methylobacterium sp. (strain 4-46), this protein is UPF0301 protein M446_6268.